We begin with the raw amino-acid sequence, 234 residues long: Sugar fermentation stimulation protein homolog (234 aa).

This sequence belongs to the SfsA family.

The protein is Sugar fermentation stimulation protein homolog of Shewanella sp. (strain MR-7).